The primary structure comprises 227 residues: Urease accessory protein UreF (227 aa).

This sequence belongs to the UreF family. In terms of assembly, ureD, UreF and UreG form a complex that acts as a GTP-hydrolysis-dependent molecular chaperone, activating the urease apoprotein by helping to assemble the nickel containing metallocenter of UreC. The UreE protein probably delivers the nickel.

Its subcellular location is the cytoplasm. Functionally, required for maturation of urease via the functional incorporation of the urease nickel metallocenter. The sequence is that of Urease accessory protein UreF from Actinobacillus pleuropneumoniae serotype 3 (strain JL03).